Reading from the N-terminus, the 177-residue chain is Cyclic pyranopterin monophosphate synthase 3 (177 aa).

Substrate is bound by residues 79–81 (LCH) and 116–117 (ME). The active site involves aspartate 131. The interval 150–177 (KSGGRSGHYRRHDADVKPSDGGSTEDGC) is disordered.

It belongs to the MoaC family. Homohexamer; trimer of dimers.

It carries out the reaction (8S)-3',8-cyclo-7,8-dihydroguanosine 5'-triphosphate = cyclic pyranopterin phosphate + diphosphate. It participates in cofactor biosynthesis; molybdopterin biosynthesis. In terms of biological role, catalyzes the conversion of (8S)-3',8-cyclo-7,8-dihydroguanosine 5'-triphosphate to cyclic pyranopterin monophosphate (cPMP). The polypeptide is Cyclic pyranopterin monophosphate synthase 3 (moaC3) (Mycobacterium bovis (strain ATCC BAA-935 / AF2122/97)).